The primary structure comprises 215 residues: Venom allergen 5.02 (215 aa).

The N-terminal stretch at 1–10 is a signal peptide; that stretch reads PIINLSFGEA. Cystine bridges form between C14–C26, C18–C111, C36–C104, and C181–C198. The SCP domain maps to 55–200; it reads VNRHNQFRQK…WHTHYLVCNY (146 aa).

It belongs to the CRISP family. Venom allergen 5-like subfamily. As to expression, expressed by the venom gland.

The protein localises to the secreted. In Dolichovespula maculata (Bald-faced hornet), this protein is Venom allergen 5.02.